We begin with the raw amino-acid sequence, 1163 residues long: Ankyrin repeat-containing protein F37A4.4 (1163 aa).

One copy of the ANK repeat lies at 856-885 (YGNTALHVATRRGYQNLVEILIKHGADRSF). The region spanning 929-1025 (LCVPEKFPVS…KLIEKDCDYL (97 aa)) is the BRCT domain.

The chain is Ankyrin repeat-containing protein F37A4.4 from Caenorhabditis elegans.